We begin with the raw amino-acid sequence, 259 residues long: Protein-L-isoaspartate O-methyltransferase 1 (259 aa).

The active site involves Ser109.

It belongs to the methyltransferase superfamily. L-isoaspartyl/D-aspartyl protein methyltransferase family.

It is found in the cytoplasm. The catalysed reaction is [protein]-L-isoaspartate + S-adenosyl-L-methionine = [protein]-L-isoaspartate alpha-methyl ester + S-adenosyl-L-homocysteine. In terms of biological role, catalyzes the methyl esterification of L-isoaspartyl residues in peptides and proteins that result from spontaneous decomposition of normal L-aspartyl and L-asparaginyl residues. It plays a role in the repair and/or degradation of damaged proteins. The protein is Protein-L-isoaspartate O-methyltransferase 1 of Cupriavidus necator (strain ATCC 17699 / DSM 428 / KCTC 22496 / NCIMB 10442 / H16 / Stanier 337) (Ralstonia eutropha).